The chain runs to 292 residues: MSQDVNELSKQPTPDKAEDNAFFPSPYSLSQYTAPKTDFDGVEHKGAYKDGKWKVLMIAAEERYVLLENGKMFSTGNHPVEMLLPLHHLMEAGFDVDVATLSGYPVKLELWAMPTEDEAVISTYNKLKEKLKQPKKLADVIKNELGPDSDYLSVFIPGGHAAVVGISESEDVQQTLDWALDNDRFIVTLCHGPAALLSAGINREKSPLEGYSVCVFPDSLDEGANIEIGYLPGRLKWLVADLLTKQGLKVVNDDMTGRTLKDRKLLTGDSPLASNELGKLAVNEMLNAIQNK.

Over residues 1-12 (MSQDVNELSKQP) the composition is skewed to polar residues. The tract at residues 1–23 (MSQDVNELSKQPTPDKAEDNAFF) is disordered. The active-site Nucleophile is C190.

Belongs to the peptidase C56 family. HchA subfamily.

Its subcellular location is the cytoplasm. It catalyses the reaction N(omega)-(1-hydroxy-2-oxopropyl)-L-arginyl-[protein] + H2O = lactate + L-arginyl-[protein] + H(+). The catalysed reaction is N(6)-(1-hydroxy-2-oxopropyl)-L-lysyl-[protein] + H2O = lactate + L-lysyl-[protein] + H(+). The enzyme catalyses S-(1-hydroxy-2-oxopropyl)-L-cysteinyl-[protein] + H2O = lactate + L-cysteinyl-[protein] + H(+). It carries out the reaction N(omega)-(1-hydroxy-2-oxoethyl)-L-arginyl-[protein] + H2O = L-arginyl-[protein] + glycolate + H(+). It catalyses the reaction N(6)-(1-hydroxy-2-oxoethyl)-L-lysyl-[protein] + H2O = glycolate + L-lysyl-[protein] + H(+). The catalysed reaction is S-(1-hydroxy-2-oxoethyl)-L-cysteinyl-[protein] + H2O = glycolate + L-cysteinyl-[protein] + H(+). The enzyme catalyses N(2)-(1-hydroxy-2-oxopropyl)-dGTP + H2O = lactate + dGTP + H(+). It carries out the reaction N(2)-(1-hydroxy-2-oxopropyl)-GTP + H2O = lactate + GTP + H(+). It catalyses the reaction N(2)-(1-hydroxy-2-oxopropyl)-GDP + H2O = lactate + GDP + H(+). The catalysed reaction is N(2)-(1-hydroxy-2-oxopropyl)-GMP + H2O = lactate + GMP + H(+). The enzyme catalyses N(2)-(1-hydroxy-2-oxoethyl)-dGTP + H2O = dGTP + glycolate + H(+). It carries out the reaction N(2)-(1-hydroxy-2-oxoethyl)-GTP + H2O = glycolate + GTP + H(+). It catalyses the reaction N(2)-(1-hydroxy-2-oxoethyl)-GDP + H2O = glycolate + GDP + H(+). The catalysed reaction is N(2)-(1-hydroxy-2-oxoethyl)-GMP + H2O = glycolate + GMP + H(+). The enzyme catalyses an N(2)-(1-hydroxy-2-oxopropyl)-guanosine in RNA + H2O = a guanosine in RNA + lactate + H(+). It carries out the reaction an N(2)-(1-hydroxy-2-oxopropyl)-2'-deoxyguanosine in DNA + H2O = a 2'-deoxyguanosine in DNA + lactate + H(+). It catalyses the reaction an N(2)-(1-hydroxy-2-oxoethyl)-guanosine in RNA + H2O = a guanosine in RNA + glycolate + H(+). The catalysed reaction is an N(2)-(1-hydroxy-2-oxoethyl)-2'-deoxyguanosine in DNA + H2O = a 2'-deoxyguanosine in DNA + glycolate + H(+). Protein and nucleotide deglycase that catalyzes the deglycation of the Maillard adducts formed between amino groups of proteins or nucleotides and reactive carbonyl groups of glyoxals. Thus, functions as a protein deglycase that repairs methylglyoxal- and glyoxal-glycated proteins, and releases repaired proteins and lactate or glycolate, respectively. Deglycates cysteine, arginine and lysine residues in proteins, and thus reactivates these proteins by reversing glycation by glyoxals. Acts on early glycation intermediates (hemithioacetals and aminocarbinols), preventing the formation of Schiff bases and advanced glycation endproducts (AGE). Also functions as a nucleotide deglycase able to repair glycated guanine in the free nucleotide pool (GTP, GDP, GMP, dGTP) and in DNA and RNA. Is thus involved in a major nucleotide repair system named guanine glycation repair (GG repair), dedicated to reversing methylglyoxal and glyoxal damage via nucleotide sanitization and direct nucleic acid repair. Plays an important role in protecting cells from carbonyl stress. In Staphylococcus aureus (strain Newman), this protein is Protein/nucleic acid deglycase HchA.